We begin with the raw amino-acid sequence, 213 residues long: ATP phosphoribosyltransferase (213 aa).

Belongs to the ATP phosphoribosyltransferase family. Short subfamily. In terms of assembly, heteromultimer composed of HisG and HisZ subunits.

The protein resides in the cytoplasm. It carries out the reaction 1-(5-phospho-beta-D-ribosyl)-ATP + diphosphate = 5-phospho-alpha-D-ribose 1-diphosphate + ATP. Its pathway is amino-acid biosynthesis; L-histidine biosynthesis; L-histidine from 5-phospho-alpha-D-ribose 1-diphosphate: step 1/9. In terms of biological role, catalyzes the condensation of ATP and 5-phosphoribose 1-diphosphate to form N'-(5'-phosphoribosyl)-ATP (PR-ATP). Has a crucial role in the pathway because the rate of histidine biosynthesis seems to be controlled primarily by regulation of HisG enzymatic activity. The protein is ATP phosphoribosyltransferase of Nitrosococcus oceani (strain ATCC 19707 / BCRC 17464 / JCM 30415 / NCIMB 11848 / C-107).